The primary structure comprises 181 residues: UPF0200 protein Ta0179 (181 aa).

ATP is bound at residue 6–13 (GMPGAGKD).

Belongs to the UPF0200 family.

The protein is UPF0200 protein Ta0179 of Thermoplasma acidophilum (strain ATCC 25905 / DSM 1728 / JCM 9062 / NBRC 15155 / AMRC-C165).